Here is a 202-residue protein sequence, read N- to C-terminus: Small ribosomal subunit protein uS4 (202 aa).

Positions 1-13 (MSRYRGPRLRITR) are enriched in basic residues. Residues 1–43 (MSRYRGPRLRITRRLGDLPGLTRKAAKRSHPPGQHGQARRKRS) form a disordered region. Positions 90–152 (NRLDNVCFRL…KGSKKLAEAN (63 aa)) constitute an S4 RNA-binding domain.

Belongs to the universal ribosomal protein uS4 family. Part of the 30S ribosomal subunit. Contacts protein S5. The interaction surface between S4 and S5 is involved in control of translational fidelity.

In terms of biological role, one of the primary rRNA binding proteins, it binds directly to 16S rRNA where it nucleates assembly of the body of the 30S subunit. Functionally, with S5 and S12 plays an important role in translational accuracy. The polypeptide is Small ribosomal subunit protein uS4 (Prochlorococcus marinus (strain MIT 9303)).